The chain runs to 95 residues: Acyl carrier protein AcpXL (95 aa).

The Carrier domain maps to 4-90 (TATFDKVADI…NLCAKIDELR (87 aa)). Position 39 is an O-(pantetheine 4'-phosphoryl)serine (S39).

In terms of processing, 4'-phosphopantetheine is transferred from CoA to a specific serine of apo-ACP by AcpS. This modification is essential for activity because fatty acids are bound in thioester linkage to the sulfhydryl of the prosthetic group.

The protein localises to the cytoplasm. It functions in the pathway glycolipid biosynthesis; KDO(2)-lipid A biosynthesis. Its function is as follows. Carrier of the growing fatty acid chain in fatty acid biosynthesis. Is involved in the transfer of long hydroxylated fatty acids to lipid A. The polypeptide is Acyl carrier protein AcpXL (acpXL) (Rhizobium meliloti (strain 1021) (Ensifer meliloti)).